The chain runs to 230 residues: MPVRILVVDDDRAVRESLRRSLSFNGYSVELAQDGVEALDLIANNRPDAVVLDVMMPRLDGLEVCRQLRSTGDDLPILVLTARDSVSERVAGLDAGADDYLPKPFALEELLARMRALLRRTSPDEGPDSPALTFLDLTLDPVTREVTRGSRQISLTRTEFALLEMLIANPRRVLTRSRILEEVWGFDFPTSGNALEVYIGYLRRKTEASGEPRLIHTVRGVGYVLRETPP.

The Response regulatory domain maps to 4–118; that stretch reads RILVVDDDRA…ELLARMRALL (115 aa). The residue at position 48 (aspartate 48) is a 4-aspartylphosphate. The ompR/PhoB-type DNA-binding region spans 129–227; sequence SPALTFLDLT…VRGVGYVLRE (99 aa).

Phosphorylated and dephosphorylated by MprB.

It is found in the cytoplasm. In terms of biological role, member of the two-component regulatory system MprB/MprA which contributes to maintaining a balance among several systems involved in stress resistance and is required for establishment and maintenance of persistent infection in the host. Functions as a transcriptional regulator that recognizes a 19-bp nucleotide motif comprizing two loosely conserved 8-bp direct DNA-binding motif repeats separated by a 3-bp spacer region. This is Response regulator MprA (mprA) from Mycobacterium sp. (strain JLS).